Reading from the N-terminus, the 116-residue chain is Transcriptional regulator WhiB4 (116 aa).

One can recognise a 4Fe-4S Wbl-type domain in the interval 36–92; the sequence is LCRATDPDELFVRGAAQRKAAVICRHCPVMQECGADALDNKVEFGVWGGMTERQRRA. 4 residues coordinate [4Fe-4S] cluster: Cys-37, Cys-59, Cys-62, and Cys-68.

This sequence belongs to the WhiB family. [4Fe-4S] cluster is required as a cofactor. The Fe-S cluster can be nitrosylated by nitric oxide (NO). Post-translationally, upon Fe-S cluster removal intramolecular disulfide bonds are formed.

It localises to the cytoplasm. Its function is as follows. Acts as a transcriptional regulator. Probably redox-responsive. The apo- but not holo-form probably binds DNA. Plays a role in lipooligosaccharide (LOS) biosynthesis by regulating LOS gene expression. The protein is Transcriptional regulator WhiB4 (whiB4) of Mycobacterium marinum (strain ATCC BAA-535 / M).